Consider the following 128-residue polypeptide: Glycine cleavage system H protein (128 aa).

A Lipoyl-binding domain is found at 22–104 (TVLVGITDYA…YGEGWIFRLK (83 aa)). Lys63 is modified (N6-lipoyllysine).

It belongs to the GcvH family. The glycine cleavage system is composed of four proteins: P, T, L and H. Monomer. (R)-lipoate is required as a cofactor.

In terms of biological role, the glycine cleavage system catalyzes the degradation of glycine. The H protein shuttles the methylamine group of glycine from the P protein to the T protein. This Thermus thermophilus (strain ATCC 27634 / DSM 579 / HB8) protein is Glycine cleavage system H protein.